The primary structure comprises 291 residues: Elongation factor Ts (291 aa).

The involved in Mg(2+) ion dislocation from EF-Tu stretch occupies residues 79–82; it reads TDFV.

It belongs to the EF-Ts family.

The protein localises to the cytoplasm. Its function is as follows. Associates with the EF-Tu.GDP complex and induces the exchange of GDP to GTP. It remains bound to the aminoacyl-tRNA.EF-Tu.GTP complex up to the GTP hydrolysis stage on the ribosome. The protein is Elongation factor Ts of Leuconostoc mesenteroides subsp. mesenteroides (strain ATCC 8293 / DSM 20343 / BCRC 11652 / CCM 1803 / JCM 6124 / NCDO 523 / NBRC 100496 / NCIMB 8023 / NCTC 12954 / NRRL B-1118 / 37Y).